Reading from the N-terminus, the 258-residue chain is Myelin proteolipid protein (258 aa).

At 1–22 the chain is on the cytoplasmic side; it reads MFPVRHALLCKALGCYDCCIRC. 3 S-palmitoyl cysteine lipidation sites follow: Cys-18, Cys-19, and Cys-22. A helical transmembrane segment spans residues 23–48; sequence LGAVPYPSLVSTLLCFTGMALFCGCG. Residues 49–82 lie on the Extracellular side of the membrane; the sequence is HEALAHTEVLVETYFVRNIQDYVILASFIKYFQY. Residues 83–103 traverse the membrane as a helical segment; that stretch reads VIYGLASFFFLYCILLLAEGF. Topologically, residues 104-128 are cytoplasmic; it reads YTTSAVKQTFGEFRSTRCGRCLSLT. 2 S-palmitoyl cysteine lipidation sites follow: Cys-121 and Cys-124. Residues 129-149 traverse the membrane as a helical segment; the sequence is FIIVTYVLAVIWLAVFAFTAI. Residues 150–218 are Extracellular-facing; the sequence is PSSSSLIWHR…KTKEFFVTYD (69 aa). Residues Cys-181 and Cys-200 are joined by a disulfide bond. The helical transmembrane segment at 219-239 threads the bilayer; that stretch reads LYIAAFAGAGIALLALFLYVV. The Cytoplasmic segment spans residues 240–258; sequence ATTYNYAVLRFLGRKGLRC.

The protein belongs to the myelin proteolipid protein family. In terms of tissue distribution, central nervous system. Highest levels in spinal cord and medulla oblongata.

It localises to the cell membrane. Its function is as follows. This is the major myelin protein from the central nervous system. It plays an important role in the formation or maintenance of the multilamellar structure of myelin. May be involved in neuron and glial cell differentiation. The sequence is that of Myelin proteolipid protein (plp) from Oncorhynchus mykiss (Rainbow trout).